Consider the following 95-residue polypeptide: UPF0132 membrane protein AF_0736 (95 aa).

The next 3 helical transmembrane spans lie at 2-22 (CYTL…SPFV), 32-52 (TFST…GALL), and 55-75 (VVMA…SRGE).

The protein belongs to the UPF0132 family.

It is found in the cell membrane. This is UPF0132 membrane protein AF_0736 from Archaeoglobus fulgidus (strain ATCC 49558 / DSM 4304 / JCM 9628 / NBRC 100126 / VC-16).